Reading from the N-terminus, the 529-residue chain is Listeriolysin O (529 aa).

Positions methionine 1–alanine 24 are cleaved as a signal peptide. Residues serine 35–glutamate 54 are disordered. The next 4 beta stranded transmembrane spans lie at glutamate 214 to alanine 227, valine 234 to lysine 243, serine 312 to alanine 321, and serine 329 to serine 341. The Conserved undecapeptide motif lies at glutamate 483 to arginine 493. The Cholesterol binding signature appears at threonine 515–leucine 516.

The protein belongs to the cholesterol-dependent cytolysin family. Homooligomeric pore complex of 35 to 50 subunits; when inserted in the host membrane.

It localises to the secreted. The protein localises to the host membrane. It is found in the host cell membrane. Its activity is regulated as follows. Activity of listeriolysin O is regulated on multiple levels. It should be high in the phagosome, thereby allowing escape of the bacteria from the phagosomal compartment. Then, once inside the host cytosol, the activity must be controlled to prevent lysis of the host plasma membrane and loss of the intracellular environment. In terms of biological role, a cholesterol-dependent toxin that causes cytolysis by forming pores in cholesterol containing host membranes. After binding to target membranes, the protein undergoes a major conformation change, leading to its insertion in the host membrane and formation of an oligomeric pore complex. Cholesterol is required for binding to host membranes, membrane insertion and pore formation; cholesterol binding is mediated by a Thr-Leu pair in the C-terminus. Acts as a major virulence factor required for the escape of bacteria from phagosomal vacuoles and entry into the host cytosol. Can be reversibly inactivated by oxidation. In Listeria monocytogenes serotype 4a (strain HCC23), this protein is Listeriolysin O (hly).